Consider the following 28-residue polypeptide: 3,4-dihydroxybenzoate decarboxylase (28 aa).

As to quaternary structure, homopentamer.

The catalysed reaction is 3,4-dihydroxybenzoate + H(+) = catechol + CO2. Its activity is regulated as follows. Inhibited by oxygen. Completely inhibited by HgCl(2). Partially inhibited by ZnSO(4), 2,3,4-trihydroxybeonzoate and 3,4,5-trihydroxybeonzoate. Unaffected by KCl, MnCl(2) or EDTA. Not stimulated by thiamine phosphate, pyridoxal 5'-phosphate or biotin. Not inhibited by hydroxylamine, NaBH(4) or avidin. Functionally, reversibly catalyzes the decarboxylation of 3,4-dihydroxybenzoate to catechol. Inactive toward 4-hydroxybenzoate and other benzoate derivatives. This chain is 3,4-dihydroxybenzoate decarboxylase, found in Sedimentibacter hydroxybenzoicus (Clostridium hydroxybenzoicum).